The sequence spans 314 residues: Versiconal hemiacetal acetate esterase (314 aa).

The Involved in the stabilization of the negatively charged intermediate by the formation of the oxyanion hole motif lies at 85 to 87 (HGG). Active-site residues include serine 154, aspartate 255, and histidine 285.

This sequence belongs to the 'GDXG' lipolytic enzyme family.

It carries out the reaction (2S,3S)-versiconal hemiacetal acetate + H2O = (2S-3S)-versiconal hemiacetal + acetate + H(+). The catalysed reaction is (3S)-versiconol acetate + H2O = (S)-versiconol + acetate + H(+). The protein operates within mycotoxin biosynthesis; aflatoxin biosynthesis. Versiconal hemiacetal acetate esterase; part of the gene cluster that mediates the biosynthesis of aflatoxins, a group of polyketide-derived furanocoumarins, and part of the most toxic and carcinogenic compounds among the known mycotoxins. The four major aflatoxins produced by A.parasiticus are aflatoxin B1 (AFB1), aflatoxin B2 (AFB2), aflatoxin G1 (AFG1) and aflatoxin G2 (AFG2). Within the aflatoxin pathway, the versiconal hemiacetal acetate esterase aflJ converts versiconal hemiacetal acetate (VHA) into versiconal (VAL). The biosynthesis of aflatoxins begins with the norsolorinic acid synthase aflC that combines a hexanoyl starter unit produced by the fatty acid synthase aflA/aflB and 7 malonyl-CoA extender units to synthesize the precursor NOR. The second step is the conversion of NOR to averantin and requires the norsolorinic acid ketoreductase aflD, which catalyzes the dehydration of norsolorinic acid to form (1'S)-averantin. The norsolorinic acid reductases aflE and aflF may also play a role in the conversion of NOR to AVN. The cytochrome P450 monooxygenase aflG then catalyzes the hydroxylation of AVN to 5'hydroxyaverantin (HAVN). The next step is performed by the 5'-hydroxyaverantin dehydrogenase aflH that transforms HAVN to 5'-oxoaverantin (OAVN) which is further converted to averufin (AVF) by aflK that plays a dual role in the pathway, as a 5'-oxoaverantin cyclase that mediates conversion of 5'-oxoaverantin, as well as a versicolorin B synthase in a later step in the pathway. The averufin oxidase aflI catalyzes the conversion of AVF to versiconal hemiacetal acetate (VHA). VHA is then the substrate for the versiconal hemiacetal acetate esterase aflJ to yield versiconal (VAL). Versicolorin B synthase aflK then converts VAL to versicolorin B (VERB) by closing the bisfuran ring of aflatoxin which is required for DNA-binding, thus giving to aflatoxin its activity as a mutagen. Then, the activity of the versicolorin B desaturase aflL leads to versicolorin A (VERA). A branch point starts from VERB since it can also be converted to dihydrodemethylsterigmatocystin (DMDHST), probably also by aflL, VERA being a precursor for aflatoxins B1 and G1, and DMDHST for aflatoxins B2 and G2. Next, the versicolorin reductase aflM and the cytochrome P450 monooxygenase aflN are involved in conversion of VERA to demethylsterigmatocystin (DMST). AflX and aflY seem also involved in this step, through probable aflX-mediated epoxide ring-opening step following versicolorin A oxidation and aflY-mediated Baeyer-Villiger oxidation required for the formation of the xanthone ring. The methyltransferase aflO then leads to the modification of DMST to sterigmatocystin (ST), and of DMDHST to dihydrosterigmatocystin (DHST). Both ST and DHST are then substrates of the O-methyltransferase aflP to yield O-methylsterigmatocystin (OMST) and dihydro-O-methylsterigmatocystin (DHOMST), respectively. Finally OMST is converted to aflatoxins B1 and G1, and DHOMST to aflatoxins B2 and G2, via the action of several enzymes including O-methylsterigmatocystin oxidoreductase aflQ, the cytochrome P450 monooxygenase aflU, but also the NADH-dependent flavin oxidoreductase nadA which is specifically required for the synthesis of AFG1. This chain is Versiconal hemiacetal acetate esterase, found in Aspergillus parasiticus (strain ATCC 56775 / NRRL 5862 / SRRC 143 / SU-1).